Consider the following 131-residue polypeptide: Heat shock protein 15 homolog (131 aa).

The S4 RNA-binding domain occupies 6 to 67 (VRLDKWLWAA…NEEKEIKIIA (62 aa)). Positions 98–131 (ARKNNSLSMPHPDRRPNKKERRDLLKFKHQDKFE) are disordered. A compositionally biased stretch (basic and acidic residues) spans 108–131 (HPDRRPNKKERRDLLKFKHQDKFE).

Belongs to the HSP15 family.

In terms of biological role, involved in the recycling of free 50S ribosomal subunits that still carry a nascent chain. Binds RNA more specifically than DNA. Binds with very high affinity to the free 50S ribosomal subunit. Does not bind it when it is part of the 70S ribosome. The protein is Heat shock protein 15 homolog (hslR) of Haemophilus influenzae (strain ATCC 51907 / DSM 11121 / KW20 / Rd).